The sequence spans 213 residues: Na(+)-translocating NADH-quinone reductase subunit D (213 aa).

The next 6 helical transmembrane spans lie at 22–42, 43–63, 77–97, 101–121, 131–151, and 183–203; these read LIAI…TTAL, TMGF…SLLR, IIIS…FFTI, LSVF…AESM, FLDG…ISII, and LGLM…IWIV.

The protein belongs to the NqrDE/RnfAE family. As to quaternary structure, composed of six subunits; NqrA, NqrB, NqrC, NqrD, NqrE and NqrF.

The protein resides in the cell inner membrane. The enzyme catalyses a ubiquinone + n Na(+)(in) + NADH + H(+) = a ubiquinol + n Na(+)(out) + NAD(+). Its function is as follows. NQR complex catalyzes the reduction of ubiquinone-1 to ubiquinol by two successive reactions, coupled with the transport of Na(+) ions from the cytoplasm to the periplasm. NqrA to NqrE are probably involved in the second step, the conversion of ubisemiquinone to ubiquinol. The polypeptide is Na(+)-translocating NADH-quinone reductase subunit D (Chlamydia trachomatis serovar L2 (strain ATCC VR-902B / DSM 19102 / 434/Bu)).